Here is a 280-residue protein sequence, read N- to C-terminus: MQTLNYLVIILIIAGVISVLAFTPLVRKLKIRFYLIQVLAIVLFVYVFFGRQIIYLFPDVYGQNSQSSQNLDSLRLSRIFLLDLCPFFAVIAPVFVFLKQKKISGVLAVFGLFGALVTLFGELIFTPVNEQDIVNFIFVGTGNNQIYFMMHFLSLLVSLAIILWDNCFSLISFFYIHVFALIYFSYVALMVSVFKGQITGNTTGILASDWTNGEYKNVATFLNLSNSDPQLVFIVGFSLSYVAILLMTLFANIPTFMEMKKDKIFIKKENLIRKDLELLA.

The next 7 helical transmembrane spans lie at 6 to 26 (YLVIILIIAGVISVLAFTPLV), 38 to 58 (VLAIVLFVYVFFGRQIIYLFP), 79 to 99 (IFLLDLCPFFAVIAPVFVFLK), 105 to 125 (GVLAVFGLFGALVTLFGELIF), 144 to 164 (NQIYFMMHFLSLLVSLAIILW), 171 to 191 (ISFFYIHVFALIYFSYVALMV), and 231 to 251 (LVFIVGFSLSYVAILLMTLFA).

It localises to the cell membrane. This is an uncharacterized protein from Mycoplasma genitalium (strain ATCC 33530 / DSM 19775 / NCTC 10195 / G37) (Mycoplasmoides genitalium).